The following is a 299-amino-acid chain: Pyridoxal kinase PdxY (299 aa).

S18 provides a ligand contact to substrate. 2 residues coordinate ATP: D120 and E157. D235 serves as a coordination point for substrate.

This sequence belongs to the pyridoxine kinase family. PdxY subfamily. In terms of assembly, homodimer. Requires Mg(2+) as cofactor.

It catalyses the reaction pyridoxal + ATP = pyridoxal 5'-phosphate + ADP + H(+). It participates in cofactor metabolism; pyridoxal 5'-phosphate salvage; pyridoxal 5'-phosphate from pyridoxal: step 1/1. Functionally, pyridoxal kinase involved in the salvage pathway of pyridoxal 5'-phosphate (PLP). Catalyzes the phosphorylation of pyridoxal to PLP. The chain is Pyridoxal kinase PdxY from Deinococcus geothermalis (strain DSM 11300 / CIP 105573 / AG-3a).